Reading from the N-terminus, the 146-residue chain is Angiogenin (146 aa).

The first 24 residues, 1 to 24 (MVMGLGLFLLVFMLGLGLTLPTLA), serve as a signal peptide directing secretion. The residue at position 25 (glutamine 25) is a Pyrrolidone carboxylic acid. Histidine 37 functions as the Proton acceptor in the catalytic mechanism. Residue arginine 45 coordinates tRNA. 3 cysteine pairs are disulfide-bonded: cysteine 50/cysteine 105, cysteine 63/cysteine 116, and cysteine 81/cysteine 131. Residues 55-59 (RRRHL) carry the Nucleolar localization signal motif. 2 residues coordinate tRNA: cysteine 105 and isoleucine 127. Catalysis depends on histidine 138, which acts as the Proton donor.

This sequence belongs to the pancreatic ribonuclease family. Homodimer. Interacts with RNH1; inhibiting ANG ribonuclease activity. Interacts with PCNA.

Its subcellular location is the secreted. The protein resides in the nucleus. It is found in the nucleolus. The protein localises to the cytoplasm. It localises to the stress granule. Its activity is regulated as follows. Has weak tRNA ribonuclease activity by itself due to partial autoinhibition by its C-terminus, which folds into a short alpha-helix that partially occludes the substrate-binding site. In absence of stress, the ribonuclease activity is inhibited by RNH1 in the cytoplasm. In response to stress, dissociates from RNH1 in the cytoplasm and associates with cytoplasmic ribosomes with vacant A-sites: ribosomes directly activate the tRNA ribonuclease activity of ANG by refolding the C-terminal alpha-helix. In response to stress, the angiogenic activity of ANG is inhibited by RNH1 in the nucleus. Functionally, secreted ribonuclease that can either promote or restrict cell proliferation of target cells, depending on the context. Endocytosed in target cells via its receptor PLXNB2 and translocates to the cytoplasm or nucleus. Under stress conditions, localizes to the cytoplasm and promotes the assembly of stress granules (SGs): specifically cleaves a subset of tRNAs within anticodon loops to produce tRNA-derived stress-induced fragments (tiRNAs), resulting in translation repression and inhibition of cell proliferation. tiRNas also prevent formation of apoptosome, thereby promoting cell survival. Preferentially cleaves RNAs between a pyrimidine and an adenosine residue, suggesting that it cleaves the anticodon loop of tRNA(Ala) (32-UUAGCAU-38) after positions 33 and 36. Cleaves a subset of tRNAs, including tRNA(Ala), tRNA(Glu), tRNA(Gly), tRNA(Lys), tRNA(Val), tRNA(His), tRNA(Asp) and tRNA(Sec). Under growth conditions and in differentiated cells, translocates to the nucleus and stimulates ribosomal RNA (rRNA) transcription, including that containing the initiation site sequences of 45S rRNA, thereby promoting cell growth and proliferation. Angiogenin induces vascularization of normal and malignant tissues via its ability to promote rRNA transcription. Involved in hematopoietic stem and progenitor cell (HSPC) growth and survival by promoting rRNA transcription in growth conditions and inhibiting translation in response to stress, respectively. Mediates the crosstalk between myeloid and intestinal epithelial cells to protect the intestinal epithelial barrier integrity: secreted by myeloid cells and promotes intestinal epithelial cells proliferation and survival. Also mediates osteoclast-endothelial cell crosstalk in growing bone: produced by osteoclasts and protects the neighboring vascular cells against senescence by promoting rRNA transcription. The sequence is that of Angiogenin (ANG) from Papio hamadryas (Hamadryas baboon).